The following is a 556-amino-acid chain: Glucose-6-phosphate isomerase (556 aa).

Residue glutamate 360 is the Proton donor of the active site. Residues histidine 391 and lysine 519 contribute to the active site.

This sequence belongs to the GPI family.

Its subcellular location is the cytoplasm. The enzyme catalyses alpha-D-glucose 6-phosphate = beta-D-fructose 6-phosphate. Its pathway is carbohydrate biosynthesis; gluconeogenesis. It functions in the pathway carbohydrate degradation; glycolysis; D-glyceraldehyde 3-phosphate and glycerone phosphate from D-glucose: step 2/4. In terms of biological role, catalyzes the reversible isomerization of glucose-6-phosphate to fructose-6-phosphate. The polypeptide is Glucose-6-phosphate isomerase (Acinetobacter baumannii (strain SDF)).